A 227-amino-acid chain; its full sequence is Cytochrome c oxidase subunit 2 (227 aa).

Residues 1 to 26 (MATWSNFNLQNSASPLMEQIIFFHDH) are Mitochondrial intermembrane-facing. Residues 27–51 (TLVILIMITILVGYLMISLFFNSYI) traverse the membrane as a helical segment. Residues 52–62 (NRFLLEGQMIE) lie on the Mitochondrial matrix side of the membrane. A helical transmembrane segment spans residues 63-81 (LIWTILPAITLIFIALPSL). The Mitochondrial intermembrane segment spans residues 82–227 (RLLYLLDELN…NFINWINNYS (146 aa)). The Cu cation site is built by histidine 161, cysteine 196, glutamate 198, cysteine 200, histidine 204, and methionine 207. A Mg(2+)-binding site is contributed by glutamate 198.

The protein belongs to the cytochrome c oxidase subunit 2 family. Component of the cytochrome c oxidase (complex IV, CIV), a multisubunit enzyme composed of a catalytic core of 3 subunits and several supernumerary subunits. The complex exists as a monomer or a dimer and forms supercomplexes (SCs) in the inner mitochondrial membrane with ubiquinol-cytochrome c oxidoreductase (cytochrome b-c1 complex, complex III, CIII). Cu cation is required as a cofactor.

It is found in the mitochondrion inner membrane. The enzyme catalyses 4 Fe(II)-[cytochrome c] + O2 + 8 H(+)(in) = 4 Fe(III)-[cytochrome c] + 2 H2O + 4 H(+)(out). In terms of biological role, component of the cytochrome c oxidase, the last enzyme in the mitochondrial electron transport chain which drives oxidative phosphorylation. The respiratory chain contains 3 multisubunit complexes succinate dehydrogenase (complex II, CII), ubiquinol-cytochrome c oxidoreductase (cytochrome b-c1 complex, complex III, CIII) and cytochrome c oxidase (complex IV, CIV), that cooperate to transfer electrons derived from NADH and succinate to molecular oxygen, creating an electrochemical gradient over the inner membrane that drives transmembrane transport and the ATP synthase. Cytochrome c oxidase is the component of the respiratory chain that catalyzes the reduction of oxygen to water. Electrons originating from reduced cytochrome c in the intermembrane space (IMS) are transferred via the dinuclear copper A center (CU(A)) of subunit 2 and heme A of subunit 1 to the active site in subunit 1, a binuclear center (BNC) formed by heme A3 and copper B (CU(B)). The BNC reduces molecular oxygen to 2 water molecules using 4 electrons from cytochrome c in the IMS and 4 protons from the mitochondrial matrix. The sequence is that of Cytochrome c oxidase subunit 2 (COII) from Choristoneura rosaceana (Oblique banded leafroller).